The sequence spans 484 residues: Protein LAZ1 homolog 1 (484 aa).

Positions 1–19 (MEWRGILCSLLFIVSVGES) are cleaved as a signal peptide. 6 consecutive transmembrane segments (helical) span residues 42 to 62 (PILS…YLIF), 76 to 96 (FLIG…LSLV), 190 to 210 (MILK…GVYG), 219 to 239 (GYPY…YCLV), 264 to 284 (IVFL…MGLV), and 299 to 319 (YIIC…FPAA). Positions 344-364 (PDPEEVKDSERTTRTRYGRHD) are disordered. Positions 347–364 (EEVKDSERTTRTRYGRHD) are enriched in basic and acidic residues. The stretch at 406 to 428 (IAKINRTFHQISENVKRFEQQKK) forms a coiled coil. Residues 459-484 (VSDSGLGSTNRHHQSRVSGLWTRMRR) are disordered.

It belongs to the TMEM184 family.

Its subcellular location is the membrane. The sequence is that of Protein LAZ1 homolog 1 from Arabidopsis thaliana (Mouse-ear cress).